The primary structure comprises 274 residues: Thiamine kinase (274 aa).

This sequence belongs to the thiamine kinase family.

The catalysed reaction is thiamine + ATP = thiamine phosphate + ADP + H(+). The protein operates within cofactor biosynthesis; thiamine diphosphate biosynthesis; thiamine phosphate from thiamine: step 1/1. In terms of biological role, catalyzes the ATP-dependent phosphorylation of thiamine to thiamine phosphate. Is involved in thiamine salvage. This chain is Thiamine kinase, found in Salmonella typhimurium (strain LT2 / SGSC1412 / ATCC 700720).